The primary structure comprises 66 residues: Ornithorhynchus venom defensin-like peptide A (66 aa).

The first 22 residues, 1–22 (MRLTYLLLLLVAVLFQAGSGSA), serve as a signal peptide directing secretion. The propeptide occupies 23-24 (EP). 3 cysteine pairs are disulfide-bonded: C33-C63, C40-C56, and C48-C64.

In terms of tissue distribution, produced by the crural gland and detected in venom from the spur located on each male hind leg. Is the only OvDLP that is expressed in venom gland alone.

The protein resides in the secreted. Does not show antimicrobial, myotoxic, hemolytic and cell-promoting activities. This is Ornithorhynchus venom defensin-like peptide A from Ornithorhynchus anatinus (Duckbill platypus).